The chain runs to 118 residues: Large ribosomal subunit protein bL20 (118 aa).

Belongs to the bacterial ribosomal protein bL20 family.

In terms of biological role, binds directly to 23S ribosomal RNA and is necessary for the in vitro assembly process of the 50S ribosomal subunit. It is not involved in the protein synthesizing functions of that subunit. This is Large ribosomal subunit protein bL20 from Cyanothece sp. (strain PCC 7425 / ATCC 29141).